We begin with the raw amino-acid sequence, 192 residues long: Phosphoheptose isomerase (192 aa).

The SIS domain occupies 37-192 (LADSFKAGGK…IQLIEKEMVK (156 aa)). 52–54 (NGG) provides a ligand contact to substrate. Residues His-61 and Glu-65 each coordinate Zn(2+). Substrate-binding positions include Glu-65, 93-94 (ND), 119-121 (STS), Ser-124, and Gln-172. Gln-172 and His-180 together coordinate Zn(2+).

It belongs to the SIS family. GmhA subfamily. As to quaternary structure, homotetramer. Zn(2+) serves as cofactor.

The protein localises to the cytoplasm. The enzyme catalyses 2 D-sedoheptulose 7-phosphate = D-glycero-alpha-D-manno-heptose 7-phosphate + D-glycero-beta-D-manno-heptose 7-phosphate. The protein operates within carbohydrate biosynthesis; D-glycero-D-manno-heptose 7-phosphate biosynthesis; D-glycero-alpha-D-manno-heptose 7-phosphate and D-glycero-beta-D-manno-heptose 7-phosphate from sedoheptulose 7-phosphate: step 1/1. Functionally, catalyzes the isomerization of sedoheptulose 7-phosphate in D-glycero-D-manno-heptose 7-phosphate. This is Phosphoheptose isomerase from Shigella dysenteriae serotype 1 (strain Sd197).